Here is a 130-residue protein sequence, read N- to C-terminus: MRKKKKKIVLSSTSEAEKVSIPYLPDDLLLNCLARISRLYYPTLSLVSKRFRSLLASTELYETRRLLGTSESCLYFFMTERRNDHEVYGKVEWCHVVHTLPLFNLSRALSCYHCLSHCFLMIIYIILFSI.

An F-box domain is found at 18-64; it reads KVSIPYLPDDLLLNCLARISRLYYPTLSLVSKRFRSLLASTELYETR.

This chain is Putative F-box protein At1g77880, found in Arabidopsis thaliana (Mouse-ear cress).